The primary structure comprises 278 residues: Urease accessory protein UreD (278 aa).

This sequence belongs to the UreD family. UreD, UreF and UreG form a complex that acts as a GTP-hydrolysis-dependent molecular chaperone, activating the urease apoprotein by helping to assemble the nickel containing metallocenter of UreC. The UreE protein probably delivers the nickel.

The protein resides in the cytoplasm. Required for maturation of urease via the functional incorporation of the urease nickel metallocenter. The chain is Urease accessory protein UreD from Staphylococcus aureus (strain JH1).